The chain runs to 245 residues: Phosphoribosylaminoimidazole-succinocarboxamide synthase (245 aa).

It belongs to the SAICAR synthetase family.

The enzyme catalyses 5-amino-1-(5-phospho-D-ribosyl)imidazole-4-carboxylate + L-aspartate + ATP = (2S)-2-[5-amino-1-(5-phospho-beta-D-ribosyl)imidazole-4-carboxamido]succinate + ADP + phosphate + 2 H(+). It participates in purine metabolism; IMP biosynthesis via de novo pathway; 5-amino-1-(5-phospho-D-ribosyl)imidazole-4-carboxamide from 5-amino-1-(5-phospho-D-ribosyl)imidazole-4-carboxylate: step 1/2. The sequence is that of Phosphoribosylaminoimidazole-succinocarboxamide synthase from Nostoc sp. (strain PCC 7120 / SAG 25.82 / UTEX 2576).